Consider the following 470-residue polypeptide: O-acyltransferase pboC (470 aa).

Active-site proton acceptor residues include histidine 149 and aspartate 386.

Belongs to the plant acyltransferase family. Monomer.

The protein operates within secondary metabolite biosynthesis. Functionally, O-acetyltransferase; part of the gene cluster that mediates the biosynthesis of protubonine B, a hydroxylated and diacetylated cyclo-L-Trp-L-Leu derivative. Within the pathway, pboC catalyzes the acetylation of protubonine D at the hydroxy group to produce protubonine C. The first step of the protubonine B synthesis is performed by the nonribosomal peptide synthetase pboA that catalyzes the formation of cyclo-L-Trp-L-Leu by condensing L-Leu with L-Trp. The flavin-dependent monooxygenase pboD is responsible for hydroxylation at C-3 of the indole ring and subsequent formation of the pyrrolidine ring, leadind to protubonine D. Protubonine D is further diacetylated by two acetyltransferases, pboB and pboC, to form the final product protubonine B via protubonine C. This Aspergillus ustus protein is O-acyltransferase pboC.